Reading from the N-terminus, the 87-residue chain is Signal recognition particle 19 kDa protein (87 aa).

This sequence belongs to the SRP19 family. In terms of assembly, part of the signal recognition particle protein translocation system, which is composed of SRP and FtsY. Archaeal SRP consists of a 7S RNA molecule of 300 nucleotides and two protein subunits: SRP54 and SRP19.

Its subcellular location is the cytoplasm. Functionally, involved in targeting and insertion of nascent membrane proteins into the cytoplasmic membrane. Binds directly to 7S RNA and mediates binding of the 54 kDa subunit of the SRP. In Methanocaldococcus jannaschii (strain ATCC 43067 / DSM 2661 / JAL-1 / JCM 10045 / NBRC 100440) (Methanococcus jannaschii), this protein is Signal recognition particle 19 kDa protein.